The chain runs to 376 residues: Alanine racemase 1 (376 aa).

The active-site Proton acceptor; specific for D-alanine is lysine 40. An N6-(pyridoxal phosphate)lysine modification is found at lysine 40. Substrate is bound at residue arginine 138. Tyrosine 268 acts as the Proton acceptor; specific for L-alanine in catalysis. Residue methionine 316 participates in substrate binding.

Belongs to the alanine racemase family. The cofactor is pyridoxal 5'-phosphate.

It carries out the reaction L-alanine = D-alanine. Its pathway is amino-acid biosynthesis; D-alanine biosynthesis; D-alanine from L-alanine: step 1/1. Functionally, catalyzes the interconversion of L-alanine and D-alanine. May also act on other amino acids. This Oceanobacillus iheyensis (strain DSM 14371 / CIP 107618 / JCM 11309 / KCTC 3954 / HTE831) protein is Alanine racemase 1 (alr1).